The chain runs to 175 residues: ATP-dependent protease subunit HslV (175 aa).

Residue threonine 2 is part of the active site. Na(+) contacts are provided by alanine 156, cysteine 159, and threonine 162.

This sequence belongs to the peptidase T1B family. HslV subfamily. As to quaternary structure, a double ring-shaped homohexamer of HslV is capped on each side by a ring-shaped HslU homohexamer. The assembly of the HslU/HslV complex is dependent on binding of ATP.

It localises to the cytoplasm. It catalyses the reaction ATP-dependent cleavage of peptide bonds with broad specificity.. Its activity is regulated as follows. Allosterically activated by HslU binding. Its function is as follows. Protease subunit of a proteasome-like degradation complex believed to be a general protein degrading machinery. This is ATP-dependent protease subunit HslV from Rhizobium etli (strain CIAT 652).